Consider the following 83-residue polypeptide: Small ribosomal subunit protein uS17 (83 aa).

Belongs to the universal ribosomal protein uS17 family. Part of the 30S ribosomal subunit.

Its function is as follows. One of the primary rRNA binding proteins, it binds specifically to the 5'-end of 16S ribosomal RNA. The chain is Small ribosomal subunit protein uS17 from Ehrlichia chaffeensis (strain ATCC CRL-10679 / Arkansas).